The following is a 144-amino-acid chain: Heme transporter hrg1-B (144 aa).

4 helical membrane-spanning segments follow: residues 6 to 26 (IYIS…AFIV), 38 to 58 (AMGG…IMYI), 71 to 91 (FFMF…ATFI), and 107 to 127 (FYLS…LGLY). The Di-leucine motif motif lies at 140–141 (IL).

It belongs to the HRG family.

It is found in the endosome membrane. It localises to the lysosome membrane. Its subcellular location is the cytoplasmic vesicle. The protein localises to the phagosome membrane. It catalyses the reaction heme b(in) = heme b(out). Its function is as follows. Heme transporter that regulates intracellular heme availability through the endosomal or lysosomal compartment. In macrophages, is the heme transporter for heme-iron recycling. Essential for macrophage iron homeostasis, transports heme from the phagolysosome to the cytoplasm during erythrophagocytosis (EP). The protein is Heme transporter hrg1-B (slc48a1a) of Danio rerio (Zebrafish).